The sequence spans 1255 residues: MTLLVITEQTIHSLCLDHGETNQIIAEIKQLEKPELLFSYITDAEPLATGEVFVGPDICGNCITHTFRVPDYVAKPPPYDSKRVYYPYSYTCLGFDSHPYDYLLTLDTKSIFQAIRKITLTRKLSIATQSDLDLIILKKLTTQSNCQSRVSSIWRQCVAACLAFEPQIQNNNSTQSPNLNNLVKRMFATLLKPIGRLPFYERRRNFVWEEEVSCPTILPLLLYSIQNLVTQFCAGVINRMEMILAFQYYLDCGVTAYQDEKLRLQKLIRNWLREGLAKFSKIAMPNWTVSGVISCTTVKPIMITTHEAREIKSAREAREASVPTYLLQYINHAIHKAISPYQTHQYWQATRVFANDGTYFASVAALTLNKAVRPRIEETTVKYPNSRYLTMNKEHIAVSLPNETDTNFGLACQFVKQFIPRLVTRLKNTNFQEEFIAFLTSSSSGKDFEDAAIATMTRTIQRVAKKRIVAAGLESRSYLNQQFIADECLAAAKLVGRTQIGRRQRAIAGVNNTRSLLGFPPMLMLKALLDMTGTTSSGKQMGNYLDLLIPLGLSPYANVIFNSADVDAMDASVQASVQQIMWHFVVYIALQLERTDYFAFTSGDEVIYELVEGKDSVATSIHMSGLARSCLRAMHLLQPQNCVLNDDIVGELVTREPTFPSGQPFTTVHHTFTLSNAIMGGTLRVTNLTNQPSTLLNLTVQGDDTRTINYGPKGCIEKCIDDQSSFVSDWGFKVSNETSSHTSEYLQQRVSCGTFVGYPDRVSLFAAERPKEGKTMKEKMSEIWSLVTDLGCRSRDPQRLVRLMYAIGVACCCRLTIRTERLVAEEFIASEVGRACCAEILVPKVAARADRGVMLRYHYPISALWLEEGGQLPPLATKRRDGTWTCFPSYYFQRGDSNRYWYWDVSLTEEKWITTVEMRSDWDSNNAIELIDDEILEAYATRYALAALGLNKTRQMERLRLSEESTIFDVEQLASGLNAYRNLSKIAISHRASERLKNAGVELPDSVLYSRHTQSRIQDAILKAQMTEKEEIEMSLYFFKDKGYLRSLRELVKSKSGDLAMIHRCEWGERVTILESSIFNVVSTTPLSMEVYPGSIMSFILCYTGLKGAHSGQLAGLVGLLQGKYGGGKISELQFSIAKKIYLTKPYLLNEFIIACGLGGEAELALKNALHAFEMLRGVEFSTVHTPRQFFFGVDSGVTLGNHLDYPNGFPGTRIELAAHLLLAMNFLSSNAQSCTGRSIRVRVPRGMWSRCTNF.

One can recognise a RdRp catalytic domain in the interval 548-756 (LIPLGLSPYA…QQRVSCGTFV (209 aa)).

Its subcellular location is the virion. The enzyme catalyses RNA(n) + a ribonucleoside 5'-triphosphate = RNA(n+1) + diphosphate. In terms of biological role, RNA-directed RNA polymerase that is involved in transcription and genome replication. Following infection, it catalyzes the synthesis of fully conservative plus strands. After core assembly, which consists in recruitment of one capped plus-strand for each genomic segments and polymerase complexes, the polymerase switches mode and catalyzes the synthesis of complementary minus-strands. This Oryza latifolia (Indian wild rice) protein is RNA-directed RNA polymerase.